The following is a 221-amino-acid chain: PKHD-type hydroxylase P9211_12561 (221 aa).

Residues 80 to 174 (KVHGTMFTRS…RIVCVGWIQS (95 aa)) form the Fe2OG dioxygenase domain. 3 residues coordinate Fe cation: histidine 98, aspartate 100, and histidine 155. Arginine 165 serves as a coordination point for 2-oxoglutarate.

Requires Fe(2+) as cofactor. It depends on L-ascorbate as a cofactor.

This Prochlorococcus marinus (strain MIT 9211) protein is PKHD-type hydroxylase P9211_12561.